The sequence spans 466 residues: ATP synthase subunit beta (466 aa).

G153–T160 is a binding site for ATP.

The protein belongs to the ATPase alpha/beta chains family. F-type ATPases have 2 components, CF(1) - the catalytic core - and CF(0) - the membrane proton channel. CF(1) has five subunits: alpha(3), beta(3), gamma(1), delta(1), epsilon(1). CF(0) has three main subunits: a(1), b(2) and c(9-12). The alpha and beta chains form an alternating ring which encloses part of the gamma chain. CF(1) is attached to CF(0) by a central stalk formed by the gamma and epsilon chains, while a peripheral stalk is formed by the delta and b chains.

The protein resides in the cell membrane. It catalyses the reaction ATP + H2O + 4 H(+)(in) = ADP + phosphate + 5 H(+)(out). Functionally, produces ATP from ADP in the presence of a proton gradient across the membrane. The catalytic sites are hosted primarily by the beta subunits. This chain is ATP synthase subunit beta, found in Oenococcus oeni (strain ATCC BAA-331 / PSU-1).